A 95-amino-acid polypeptide reads, in one-letter code: Small ribosomal subunit protein mS37 (95 aa).

A CHCH domain is found at 27–69 (ANKCLVLMSNLLQCWSSYGHMSPKCAGLVTELKSCTSESALGK). 2 short sequence motifs (cx9C motif) span residues 30–40 (CLVLMSNLLQC) and 51–61 (CAGLVTELKSC). 2 disulfides stabilise this stretch: cysteine 30-cysteine 61 and cysteine 40-cysteine 51.

Belongs to the mitochondrion-specific ribosomal protein mS37 family. Component of the mitochondrial small ribosomal subunit (mt-SSU). Mature yeast 74S mitochondrial ribosomes consist of a small (37S) and a large (54S) subunit. The 37S small subunit contains a 15S ribosomal RNA (15S mt-rRNA) and 34 different proteins. The 54S large subunit contains a 21S rRNA (21S mt-rRNA) and 46 different proteins.

It is found in the mitochondrion. It localises to the mitochondrion matrix. In terms of biological role, component of the mitochondrial ribosome (mitoribosome), a dedicated translation machinery responsible for the synthesis of mitochondrial genome-encoded proteins, including at least some of the essential transmembrane subunits of the mitochondrial respiratory chain. The mitoribosomes are attached to the mitochondrial inner membrane and translation products are cotranslationally integrated into the membrane. This is Small ribosomal subunit protein mS37 (MRP10) from Saccharomyces cerevisiae (strain ATCC 204508 / S288c) (Baker's yeast).